A 359-amino-acid chain; its full sequence is Peptide chain release factor 1 (359 aa).

Position 235 is an N5-methylglutamine (Gln-235).

This sequence belongs to the prokaryotic/mitochondrial release factor family. Methylated by PrmC. Methylation increases the termination efficiency of RF1.

Its subcellular location is the cytoplasm. Functionally, peptide chain release factor 1 directs the termination of translation in response to the peptide chain termination codons UAG and UAA. This is Peptide chain release factor 1 from Anaplasma marginale (strain Florida).